An 85-amino-acid chain; its full sequence is Large ribosomal subunit protein bL31B (85 aa).

Belongs to the bacterial ribosomal protein bL31 family. Type B subfamily. As to quaternary structure, part of the 50S ribosomal subunit.

The chain is Large ribosomal subunit protein bL31B from Staphylococcus epidermidis (strain ATCC 35984 / DSM 28319 / BCRC 17069 / CCUG 31568 / BM 3577 / RP62A).